The primary structure comprises 140 residues: Nucleoside diphosphate kinase (140 aa).

Residues Lys11, Phe59, Arg87, Thr93, Arg104, and Asn114 each contribute to the ATP site. Catalysis depends on His117, which acts as the Pros-phosphohistidine intermediate.

This sequence belongs to the NDK family. In terms of assembly, homotetramer. The cofactor is Mg(2+).

The protein localises to the cytoplasm. It carries out the reaction a 2'-deoxyribonucleoside 5'-diphosphate + ATP = a 2'-deoxyribonucleoside 5'-triphosphate + ADP. It catalyses the reaction a ribonucleoside 5'-diphosphate + ATP = a ribonucleoside 5'-triphosphate + ADP. Functionally, major role in the synthesis of nucleoside triphosphates other than ATP. The ATP gamma phosphate is transferred to the NDP beta phosphate via a ping-pong mechanism, using a phosphorylated active-site intermediate. The polypeptide is Nucleoside diphosphate kinase (Rhizorhabdus wittichii (strain DSM 6014 / CCUG 31198 / JCM 15750 / NBRC 105917 / EY 4224 / RW1) (Sphingomonas wittichii)).